Consider the following 328-residue polypeptide: Tetraacyldisaccharide 4'-kinase (328 aa).

ATP is bound at residue 55–62 (TAGGNGKT).

This sequence belongs to the LpxK family.

It carries out the reaction a lipid A disaccharide + ATP = a lipid IVA + ADP + H(+). The protein operates within glycolipid biosynthesis; lipid IV(A) biosynthesis; lipid IV(A) from (3R)-3-hydroxytetradecanoyl-[acyl-carrier-protein] and UDP-N-acetyl-alpha-D-glucosamine: step 6/6. Functionally, transfers the gamma-phosphate of ATP to the 4'-position of a tetraacyldisaccharide 1-phosphate intermediate (termed DS-1-P) to form tetraacyldisaccharide 1,4'-bis-phosphate (lipid IVA). This is Tetraacyldisaccharide 4'-kinase from Escherichia coli (strain 55989 / EAEC).